A 484-amino-acid polypeptide reads, in one-letter code: tRNA-2-methylthio-N(6)-dimethylallyladenosine synthase (484 aa).

An MTTase N-terminal domain is found at 36-153 (GKLYIKTHGC…LPELIRARRE (118 aa)). [4Fe-4S] cluster is bound by residues Cys-45, Cys-82, Cys-116, Cys-190, Cys-194, and Cys-197. Positions 176–415 (RAEGPSAFVS…HINAHAASIS (240 aa)) constitute a Radical SAM core domain. The TRAM domain occupies 416–479 (QSMVGSVQRV…SNSLRGRIQL (64 aa)). Residues 428–450 (EGPSRRDPNELTGKSENMRPVNF) form a disordered region.

The protein belongs to the methylthiotransferase family. MiaB subfamily. Monomer. Requires [4Fe-4S] cluster as cofactor.

The protein localises to the cytoplasm. The catalysed reaction is N(6)-dimethylallyladenosine(37) in tRNA + (sulfur carrier)-SH + AH2 + 2 S-adenosyl-L-methionine = 2-methylsulfanyl-N(6)-dimethylallyladenosine(37) in tRNA + (sulfur carrier)-H + 5'-deoxyadenosine + L-methionine + A + S-adenosyl-L-homocysteine + 2 H(+). Catalyzes the methylthiolation of N6-(dimethylallyl)adenosine (i(6)A), leading to the formation of 2-methylthio-N6-(dimethylallyl)adenosine (ms(2)i(6)A) at position 37 in tRNAs that read codons beginning with uridine. In Xanthomonas axonopodis pv. citri (strain 306), this protein is tRNA-2-methylthio-N(6)-dimethylallyladenosine synthase.